The following is a 197-amino-acid chain: dCTP deaminase, dUMP-forming (197 aa).

Residues 105–110, D123, 131–133, Q152, Y166, K174, and Q178 contribute to the dCTP site; these read RSSMGR and TLE. E133 acts as the Proton donor/acceptor in catalysis.

Belongs to the dCTP deaminase family. Homotrimer.

The enzyme catalyses dCTP + 2 H2O = dUMP + NH4(+) + diphosphate. It participates in pyrimidine metabolism; dUMP biosynthesis; dUMP from dCTP: step 1/1. Functionally, bifunctional enzyme that catalyzes both the deamination of dCTP to dUTP and the hydrolysis of dUTP to dUMP without releasing the toxic dUTP intermediate. This chain is dCTP deaminase, dUMP-forming, found in Methanosphaera stadtmanae (strain ATCC 43021 / DSM 3091 / JCM 11832 / MCB-3).